We begin with the raw amino-acid sequence, 245 residues long: Thiopurine S-methyltransferase (245 aa).

Trp-29 to Phe-40 contributes to the S-adenosyl-L-methionine binding site. Residue Phe-40 participates in substrate binding. Lys-58 carries the post-translational modification N6-acetyllysine. 3 residues coordinate S-adenosyl-L-methionine: Leu-69, Glu-90, and Arg-152.

The protein belongs to the class I-like SAM-binding methyltransferase superfamily. TPMT family. In terms of assembly, monomer.

The protein resides in the cytoplasm. The enzyme catalyses S-adenosyl-L-methionine + a thiopurine = S-adenosyl-L-homocysteine + a thiopurine S-methylether.. This Lynx rufus (Bobcat) protein is Thiopurine S-methyltransferase (TPMT).